Here is a 201-residue protein sequence, read N- to C-terminus: 3-isopropylmalate dehydratase small subunit (201 aa).

The protein belongs to the LeuD family. LeuD type 1 subfamily. Heterodimer of LeuC and LeuD.

It carries out the reaction (2R,3S)-3-isopropylmalate = (2S)-2-isopropylmalate. Its pathway is amino-acid biosynthesis; L-leucine biosynthesis; L-leucine from 3-methyl-2-oxobutanoate: step 2/4. In terms of biological role, catalyzes the isomerization between 2-isopropylmalate and 3-isopropylmalate, via the formation of 2-isopropylmaleate. In Escherichia fergusonii (strain ATCC 35469 / DSM 13698 / CCUG 18766 / IAM 14443 / JCM 21226 / LMG 7866 / NBRC 102419 / NCTC 12128 / CDC 0568-73), this protein is 3-isopropylmalate dehydratase small subunit.